Reading from the N-terminus, the 206-residue chain is GDT1-like protein sll0615 (206 aa).

The next 5 helical transmembrane spans lie at W36–G56, I58–F78, I114–W134, A151–M171, and V185–I205.

It belongs to the GDT1 family.

The protein resides in the cell membrane. In Synechocystis sp. (strain ATCC 27184 / PCC 6803 / Kazusa), this protein is GDT1-like protein sll0615.